A 508-amino-acid polypeptide reads, in one-letter code: Protoporphyrinogen oxidase 2, chloroplastic/mitochondrial (508 aa).

The transit peptide at 1–22 (MASGAVADHQIEAVSGKRVAVV) directs the protein to the chloroplast and mitochondrion. FAD-binding positions include 23-28 (GAGVSG), 46-47 (EA), and 68-71 (GANT). The segment at 219-239 (KGGKSRDTKSSPGTKKGSRGS) is disordered. FAD-binding positions include V268 and 475–477 (LSV).

Belongs to the protoporphyrinogen/coproporphyrinogen oxidase family. Protoporphyrinogen oxidase subfamily. FAD is required as a cofactor.

It is found in the plastid. Its subcellular location is the chloroplast. It localises to the mitochondrion. The enzyme catalyses protoporphyrinogen IX + 3 O2 = protoporphyrin IX + 3 H2O2. It functions in the pathway porphyrin-containing compound metabolism; protoporphyrin-IX biosynthesis; protoporphyrin-IX from protoporphyrinogen-IX: step 1/1. The protein operates within porphyrin-containing compound metabolism; chlorophyll biosynthesis. Its function is as follows. Catalyzes the 6-electron oxidation of protoporphyrinogen-IX to form protoporphyrin-IX. In Arabidopsis thaliana (Mouse-ear cress), this protein is Protoporphyrinogen oxidase 2, chloroplastic/mitochondrial (PPOX2).